The following is a 225-amino-acid chain: Ribonuclease HII (225 aa).

The RNase H type-2 domain occupies 2–210 (GIVVGVDEAG…VRKLGGPWRS (209 aa)). A divalent metal cation is bound by residues aspartate 8, glutamate 9, and aspartate 107.

Belongs to the RNase HII family. Requires Mn(2+) as cofactor. Mg(2+) is required as a cofactor.

It localises to the cytoplasm. The catalysed reaction is Endonucleolytic cleavage to 5'-phosphomonoester.. In terms of biological role, endonuclease that specifically degrades the RNA of RNA-DNA hybrids. This is Ribonuclease HII (rnhB) from Aeropyrum pernix (strain ATCC 700893 / DSM 11879 / JCM 9820 / NBRC 100138 / K1).